A 227-amino-acid polypeptide reads, in one-letter code: Transmembrane emp24 domain-containing protein 4 (227 aa).

The signal sequence occupies residues 1–29 (MAGVGAGPLRAMGRQALLLLALCATGAQG). Residues 30–194 (LYFHIGETEK…RLTSESTNQR (165 aa)) are Lumenal-facing. Residues 39-137 (KRCFIEEIPD…KLRVHLDIQV (99 aa)) form the GOLD domain. Asn-117 is a glycosylation site (N-linked (GlcNAc...) asparagine). A coiled-coil region spans residues 147 to 176 (IAAKDKLTELQLRARQLLDQVEQIQKEQDY). Residues 195-212 (VLWWSIAQTVILILTGIW) traverse the membrane as a helical segment. Residues 213 to 227 (QMRHLKSFFEAKKLV) lie on the Cytoplasmic side of the membrane. The COPII vesicle coat-binding signature appears at 220-221 (FF). Residues 220 to 227 (FFEAKKLV) carry the COPI vesicle coat-binding motif.

The protein belongs to the EMP24/GP25L family.

It is found in the endoplasmic reticulum membrane. Involved in vesicular protein trafficking, mainly in the early secretory pathway. targeting. Involved in the maintenance of the Golgi apparatus. Appears to play a role in the biosynthesis of secreted cargo including processing. Involved in endoplasmic reticulum stress response. May play a role in the regulation of heat-shock response and apoptosis. In Homo sapiens (Human), this protein is Transmembrane emp24 domain-containing protein 4 (TMED4).